We begin with the raw amino-acid sequence, 805 residues long: N-(5-amino-5-carboxypentanoyl)-L-cysteinyl-D-valine synthase (805 aa).

A disordered region spans residues 783-805 (PDTGGGAVGSTTTGGVRGELREI).

It belongs to the ATP-dependent AMP-binding enzyme family. It depends on pantetheine 4'-phosphate as a cofactor.

It carries out the reaction L-2-aminoadipate + L-valine + L-cysteine + 3 ATP + H2O = N-[(5S)-5-amino-5-carboxypentanoyl]-L-cysteinyl-D-valine + 3 AMP + 3 diphosphate + 3 H(+). Its pathway is antibiotic biosynthesis; penicillin G biosynthesis; penicillin G from L-alpha-aminoadipate and L-cysteine and L-valine: step 1/3. Its function is as follows. Each of the constituent amino acids of ACV are activated as aminoacyl-adenylates with peptide bonds formed through the participation of amino acid thioester intermediates. The chain is N-(5-amino-5-carboxypentanoyl)-L-cysteinyl-D-valine synthase (pcbAB) from Streptomyces clavuligerus.